We begin with the raw amino-acid sequence, 353 residues long: Ion-translocating oxidoreductase complex subunit D (353 aa).

3 helical membrane passes run 20-39, 68-88, and 129-149; these read LMRL…WYFF, PISH…LGIC, and VMLL…LTLV. FMN phosphoryl threonine is present on Thr-187. Helical transmembrane passes span 215 to 235, 238 to 258, 267 to 287, and 300 to 320; these read LALG…FLIS, AIAW…SFIG, ASTM…FILT, and IIVG…GGYP.

It belongs to the NqrB/RnfD family. In terms of assembly, the complex is composed of six subunits: RnfA, RnfB, RnfC, RnfD, RnfE and RnfG. FMN is required as a cofactor.

The protein localises to the cell inner membrane. Functionally, part of a membrane-bound complex that couples electron transfer with translocation of ions across the membrane. The sequence is that of Ion-translocating oxidoreductase complex subunit D from Colwellia psychrerythraea (strain 34H / ATCC BAA-681) (Vibrio psychroerythus).